Reading from the N-terminus, the 308-residue chain is SAP30-binding protein (308 aa).

The interval 15-101 (AEYSDPESDG…EAEKRDPQEL (87 aa)) is disordered. 4 positions are modified to phosphoserine: serine 18, serine 22, serine 43, and serine 52. Over residues 57 to 78 (DEDGYEEEEDENSKQSEDDDSE) the composition is skewed to acidic residues. Residues 79 to 99 (TEKPEADDPKDNTEAEKRDPQ) show a composition bias toward basic and acidic residues. A Glycyl lysine isopeptide (Lys-Gly) (interchain with G-Cter in SUMO2) cross-link involves residue lysine 95. Position 113 is a phosphoserine (serine 113). Glycyl lysine isopeptide (Lys-Gly) (interchain with G-Cter in SUMO2) cross-links involve residues lysine 220, lysine 304, and lysine 305.

The protein belongs to the HCNGP family. In terms of assembly, interacts with histone deacetylase complex subunit SAP30.

Its subcellular location is the nucleus. Plays a role in transcriptional repression by promoting histone deacetylase activity, leading to deacetylation of histone H3. May be involved in the regulation of beta-2-microglobulin genes. The protein is SAP30-binding protein (Sap30bp) of Mus musculus (Mouse).